Reading from the N-terminus, the 199-residue chain is Acireductone dioxygenase 3 (199 aa).

Residues His99, His101, Glu105, and His144 each coordinate Fe(2+). The Ni(2+) site is built by His99, His101, Glu105, and His144.

The protein belongs to the acireductone dioxygenase (ARD) family. The cofactor is Fe(2+). Requires Ni(2+) as cofactor.

Its subcellular location is the cytoplasm. The protein localises to the nucleus. The catalysed reaction is 1,2-dihydroxy-5-(methylsulfanyl)pent-1-en-3-one + O2 = 4-methylsulfanyl-2-oxobutanoate + formate + 2 H(+). The enzyme catalyses 1,2-dihydroxy-5-(methylsulfanyl)pent-1-en-3-one + O2 = 3-(methylsulfanyl)propanoate + CO + formate + 2 H(+). It functions in the pathway amino-acid biosynthesis; L-methionine biosynthesis via salvage pathway; L-methionine from S-methyl-5-thio-alpha-D-ribose 1-phosphate: step 5/6. Catalyzes 2 different reactions between oxygen and the acireductone 1,2-dihydroxy-3-keto-5-methylthiopentene (DHK-MTPene) depending upon the metal bound in the active site. Fe-containing acireductone dioxygenase (Fe-ARD) produces formate and 2-keto-4-methylthiobutyrate (KMTB), the alpha-ketoacid precursor of methionine in the methionine recycle pathway. Ni-containing acireductone dioxygenase (Ni-ARD) produces methylthiopropionate, carbon monoxide and formate, and does not lie on the methionine recycle pathway. This chain is Acireductone dioxygenase 3 (ARD3), found in Arabidopsis thaliana (Mouse-ear cress).